A 128-amino-acid polypeptide reads, in one-letter code: uncharacterized protein (128 aa).

Residues 95 to 123 adopt a coiled-coil conformation; the sequence is IIDFATAKRELDRLTEEIATLKGELAQDK.

The protein resides in the cellular thylakoid membrane. This is an uncharacterized protein from Synechocystis sp. (strain ATCC 27184 / PCC 6803 / Kazusa).